The chain runs to 185 residues: MIDEALFDAEEKMEKAVAVARDDLSTIRTGRANPGMFSRIVIDYYGAATPITQLASINVPEARLVVIKPYEASQVGAIETAIRNSDLGVNPTNDGTLIRVAVPQLTEERRRELVKQAKSKGEDAKVSVRNIRRKAMEELHRIRKDGEAGEDEVGRAEKDLDKTTHQYITQIDELVKHKEGELLEV.

It belongs to the RRF family.

It localises to the cytoplasm. Responsible for the release of ribosomes from messenger RNA at the termination of protein biosynthesis. May increase the efficiency of translation by recycling ribosomes from one round of translation to another. The protein is Ribosome-recycling factor of Mycobacterium avium (strain 104).